Consider the following 347-residue polypeptide: Isopentenyl-diphosphate delta-isomerase (347 aa).

Arginine 5–lysine 6 serves as a coordination point for substrate. FMN-binding positions include serine 61, serine 62–threonine 64, serine 92, and asparagine 120. Serine 92–arginine 94 lines the substrate pocket. Glutamine 159 contacts substrate. Glutamate 160 contacts Mg(2+). Residues lysine 189, serine 214, threonine 219, glycine 269 to arginine 271, and alanine 290 to arginine 291 each bind FMN.

It belongs to the IPP isomerase type 2 family. As to quaternary structure, homooctamer. Dimer of tetramers. It depends on FMN as a cofactor. The cofactor is NADPH. Mg(2+) serves as cofactor.

It is found in the cytoplasm. It carries out the reaction isopentenyl diphosphate = dimethylallyl diphosphate. Its function is as follows. Involved in the biosynthesis of isoprenoids. Catalyzes the 1,3-allylic rearrangement of the homoallylic substrate isopentenyl (IPP) to its allylic isomer, dimethylallyl diphosphate (DMAPP). The sequence is that of Isopentenyl-diphosphate delta-isomerase from Thermoplasma volcanium (strain ATCC 51530 / DSM 4299 / JCM 9571 / NBRC 15438 / GSS1).